A 207-amino-acid chain; its full sequence is uncharacterized protein (207 aa).

A helical transmembrane segment spans residues 177-197 (LILAIGFIIGILLPTFFILLG).

Its subcellular location is the membrane. This is an uncharacterized protein from Haemophilus influenzae (strain ATCC 51907 / DSM 11121 / KW20 / Rd).